Here is a 566-residue protein sequence, read N- to C-terminus: CTP synthase (566 aa).

Positions 1–270 (MTKFVFVTGG…DGLICDKLRL (270 aa)) are amidoligase domain. Residue Ser-13 coordinates CTP. Position 13 (Ser-13) interacts with UTP. ATP contacts are provided by residues 14 to 19 (SLGKGI) and Asp-71. Residues Asp-71 and Glu-144 each coordinate Mg(2+). CTP is bound by residues 151 to 153 (DIE), 191 to 196 (KTKPTQ), and Lys-227. UTP-binding positions include 191 to 196 (KTKPTQ) and Lys-227. The Glutamine amidotransferase type-1 domain maps to 295–547 (SIAMVGKYVD…IAATLEQRSA (253 aa)). Residue Gly-356 participates in L-glutamine binding. Cys-383 (nucleophile; for glutamine hydrolysis) is an active-site residue. L-glutamine-binding positions include 384–387 (LGMQ), Glu-407, and Arg-473. Active-site residues include His-520 and Glu-522.

This sequence belongs to the CTP synthase family. Homotetramer.

It catalyses the reaction UTP + L-glutamine + ATP + H2O = CTP + L-glutamate + ADP + phosphate + 2 H(+). The enzyme catalyses L-glutamine + H2O = L-glutamate + NH4(+). It carries out the reaction UTP + NH4(+) + ATP = CTP + ADP + phosphate + 2 H(+). It participates in pyrimidine metabolism; CTP biosynthesis via de novo pathway; CTP from UDP: step 2/2. With respect to regulation, allosterically activated by GTP, when glutamine is the substrate; GTP has no effect on the reaction when ammonia is the substrate. The allosteric effector GTP functions by stabilizing the protein conformation that binds the tetrahedral intermediate(s) formed during glutamine hydrolysis. Inhibited by the product CTP, via allosteric rather than competitive inhibition. Its function is as follows. Catalyzes the ATP-dependent amination of UTP to CTP with either L-glutamine or ammonia as the source of nitrogen. Regulates intracellular CTP levels through interactions with the four ribonucleotide triphosphates. This Polaromonas naphthalenivorans (strain CJ2) protein is CTP synthase.